Here is a 663-residue protein sequence, read N- to C-terminus: DNA topoisomerase 4 subunit B (663 aa).

Residues Y7, N47, D74, 114–120, and K341 each bind ATP; that span reads GLHGVGA. Residues 386 to 416 are disordered; the sequence is REAARKAREDARSGKKNKRKDTLLSGKLTPA. The span at 387–398 shows a compositional bias: basic and acidic residues; the sequence is EAARKAREDARS. Residues 424–538 enclose the Toprim domain; it reads NELYLVEGDS…AGRVFIALPP (115 aa). Mg(2+)-binding residues include E430, D503, and D505.

The protein belongs to the type II topoisomerase family. ParE type 2 subfamily. In terms of assembly, heterotetramer composed of ParC and ParE. Mg(2+) serves as cofactor. It depends on Mn(2+) as a cofactor. Ca(2+) is required as a cofactor.

The catalysed reaction is ATP-dependent breakage, passage and rejoining of double-stranded DNA.. Its function is as follows. Topoisomerase IV is essential for chromosome segregation. It relaxes supercoiled DNA. Performs the decatenation events required during the replication of a circular DNA molecule. The protein is DNA topoisomerase 4 subunit B of Staphylococcus aureus (strain NCTC 8325 / PS 47).